Here is a 451-residue protein sequence, read N- to C-terminus: Nicotinamide phosphoribosyltransferase (451 aa).

Arginine 209 is a binding site for diphosphate. Aspartate 232 serves as a coordination point for beta-nicotinamide D-ribonucleotide. Diphosphate is bound by residues histidine 248 and arginine 309. Residues 309-311, 364-365, and arginine 403 each bind beta-nicotinamide D-ribonucleotide; these read RPD and GD.

It belongs to the NAPRTase family.

It catalyses the reaction beta-nicotinamide D-ribonucleotide + diphosphate = 5-phospho-alpha-D-ribose 1-diphosphate + nicotinamide + H(+). Its pathway is cofactor biosynthesis; NAD(+) biosynthesis; nicotinamide D-ribonucleotide from 5-phospho-alpha-D-ribose 1-diphosphate and nicotinamide: step 1/1. Catalyzes the condensation of nicotinamide with 5-phosphoribosyl-1-pyrophosphate to yield nicotinamide mononucleotide, an intermediate in the biosynthesis of NAD. The chain is Nicotinamide phosphoribosyltransferase from Mycoplasma pneumoniae (strain ATCC 29342 / M129 / Subtype 1) (Mycoplasmoides pneumoniae).